The sequence spans 246 residues: Protein SRL3 (246 aa).

The span at 49–61 (SISEAQDSPTSAP) shows a compositional bias: polar residues. 2 disordered regions span residues 49-68 (SISEAQDSPTSAPSPDGNED) and 200-229 (HAKSNRVDNVNVSPLRWSSHRRTQSTQENS). Position 212 is a phosphoserine (Ser-212).

Interacts with CLN2. Post-translationally, phosphorylated by CDC28, probably in association with G1 cyclin CLN2.

It localises to the cytoplasm. Its function is as follows. Weakly suppresses a RAD53 null mutation when overexpressed. The sequence is that of Protein SRL3 (SRL3) from Saccharomyces cerevisiae (strain ATCC 204508 / S288c) (Baker's yeast).